We begin with the raw amino-acid sequence, 566 residues long: Urease subunit alpha (566 aa).

Residues 128–566 (GGIDTHIHWI…LPMAQRYFLF (439 aa)) form the Urease domain. The Ni(2+) site is built by H133, H135, and K216. At K216 the chain carries N6-carboxylysine. Position 218 (H218) interacts with substrate. Ni(2+) contacts are provided by H245 and H271. The active-site Proton donor is H319. D359 contacts Ni(2+).

The protein belongs to the metallo-dependent hydrolases superfamily. Urease alpha subunit family. In terms of assembly, heterotrimer of UreA (gamma), UreB (beta) and UreC (alpha) subunits. Three heterotrimers associate to form the active enzyme. Ni cation serves as cofactor. Carboxylation allows a single lysine to coordinate two nickel ions.

Its subcellular location is the cytoplasm. It catalyses the reaction urea + 2 H2O + H(+) = hydrogencarbonate + 2 NH4(+). It participates in nitrogen metabolism; urea degradation; CO(2) and NH(3) from urea (urease route): step 1/1. This chain is Urease subunit alpha, found in Acinetobacter baylyi (strain ATCC 33305 / BD413 / ADP1).